We begin with the raw amino-acid sequence, 297 residues long: 4-hydroxy-tetrahydrodipicolinate synthase (297 aa).

A pyruvate-binding site is contributed by threonine 50. Residue tyrosine 138 is the Proton donor/acceptor of the active site. The Schiff-base intermediate with substrate role is filled by lysine 166. A pyruvate-binding site is contributed by isoleucine 208.

This sequence belongs to the DapA family. Homotetramer; dimer of dimers.

It localises to the cytoplasm. The enzyme catalyses L-aspartate 4-semialdehyde + pyruvate = (2S,4S)-4-hydroxy-2,3,4,5-tetrahydrodipicolinate + H2O + H(+). It functions in the pathway amino-acid biosynthesis; L-lysine biosynthesis via DAP pathway; (S)-tetrahydrodipicolinate from L-aspartate: step 3/4. Its function is as follows. Catalyzes the condensation of (S)-aspartate-beta-semialdehyde [(S)-ASA] and pyruvate to 4-hydroxy-tetrahydrodipicolinate (HTPA). The protein is 4-hydroxy-tetrahydrodipicolinate synthase of Desulfotalea psychrophila (strain LSv54 / DSM 12343).